Consider the following 190-residue polypeptide: Nascent polypeptide-associated complex subunit alpha (190 aa).

Disordered regions lie at residues 20 to 42 and 123 to 155; these read FDSD…AERK and SLQN…VDAK. Residues 30–40 are compositionally biased toward basic and acidic residues; sequence HASDKVASRAE. In terms of domain architecture, NAC-A/B spans 37 to 102; it reads SRAERKSRKA…AKAEDMSQLA (66 aa). The segment covering 138–151 has biased composition (acidic residues); the sequence is EEEEDDDSPIDEEG. One can recognise a UBA domain in the interval 152-189; that stretch reads VDAKDIDLVMQQVSCSRRKAVKALKESNGDLINAIMNA.

Belongs to the NAC-alpha family. Part of the nascent polypeptide-associated complex (NAC), consisting of EGD2 and EGD1. NAC associates with ribosomes via EGD1.

It localises to the cytoplasm. The protein localises to the nucleus. Functionally, component of the nascent polypeptide-associated complex (NAC), a dynamic component of the ribosomal exit tunnel, protecting the emerging polypeptides from interaction with other cytoplasmic proteins to ensure appropriate nascent protein targeting. The NAC complex also promotes mitochondrial protein import by enhancing productive ribosome interactions with the outer mitochondrial membrane and blocks the inappropriate interaction of ribosomes translating non-secretory nascent polypeptides with translocation sites in the membrane of the endoplasmic reticulum. EGD2 may also be involved in transcription regulation. The chain is Nascent polypeptide-associated complex subunit alpha (EGD2) from Mycosarcoma maydis (Corn smut fungus).